The primary structure comprises 119 residues: DNA-directed RNA polymerase subunit omega (119 aa).

This sequence belongs to the RNA polymerase subunit omega family. As to quaternary structure, the RNAP catalytic core consists of 2 alpha, 1 beta, 1 beta' and 1 omega subunit. When a sigma factor is associated with the core the holoenzyme is formed, which can initiate transcription.

The catalysed reaction is RNA(n) + a ribonucleoside 5'-triphosphate = RNA(n+1) + diphosphate. Its function is as follows. Promotes RNA polymerase assembly. Latches the N- and C-terminal regions of the beta' subunit thereby facilitating its interaction with the beta and alpha subunits. The polypeptide is DNA-directed RNA polymerase subunit omega (rpoZ) (Caulobacter vibrioides (strain ATCC 19089 / CIP 103742 / CB 15) (Caulobacter crescentus)).